The sequence spans 235 residues: Deoxyribose-phosphate aldolase (235 aa).

Catalysis depends on aspartate 107, which acts as the Proton donor/acceptor. Lysine 167 functions as the Schiff-base intermediate with acetaldehyde in the catalytic mechanism. The active-site Proton donor/acceptor is the lysine 197.

The protein belongs to the DeoC/FbaB aldolase family. DeoC type 1 subfamily. In terms of assembly, homotetramer.

It is found in the cytoplasm. It catalyses the reaction 2-deoxy-D-ribose 5-phosphate = D-glyceraldehyde 3-phosphate + acetaldehyde. The protein operates within carbohydrate degradation; 2-deoxy-D-ribose 1-phosphate degradation; D-glyceraldehyde 3-phosphate and acetaldehyde from 2-deoxy-alpha-D-ribose 1-phosphate: step 2/2. Functionally, catalyzes a reversible aldol reaction between acetaldehyde and D-glyceraldehyde 3-phosphate to generate 2-deoxy-D-ribose 5-phosphate. The sequence is that of Deoxyribose-phosphate aldolase from Aeropyrum pernix (strain ATCC 700893 / DSM 11879 / JCM 9820 / NBRC 100138 / K1).